A 153-amino-acid chain; its full sequence is 6,7-dimethyl-8-ribityllumazine synthase (153 aa).

Residues phenylalanine 21, 55 to 57, and 79 to 81 contribute to the 5-amino-6-(D-ribitylamino)uracil site; these read AFE and TVI. (2S)-2-hydroxy-3-oxobutyl phosphate is bound at residue 84 to 85; it reads AT. Histidine 87 acts as the Proton donor in catalysis. A 5-amino-6-(D-ribitylamino)uracil-binding site is contributed by phenylalanine 112. Arginine 126 provides a ligand contact to (2S)-2-hydroxy-3-oxobutyl phosphate.

It belongs to the DMRL synthase family. In terms of assembly, forms an icosahedral capsid composed of 60 subunits, arranged as a dodecamer of pentamers.

It carries out the reaction (2S)-2-hydroxy-3-oxobutyl phosphate + 5-amino-6-(D-ribitylamino)uracil = 6,7-dimethyl-8-(1-D-ribityl)lumazine + phosphate + 2 H2O + H(+). It participates in cofactor biosynthesis; riboflavin biosynthesis; riboflavin from 2-hydroxy-3-oxobutyl phosphate and 5-amino-6-(D-ribitylamino)uracil: step 1/2. In terms of biological role, catalyzes the formation of 6,7-dimethyl-8-ribityllumazine by condensation of 5-amino-6-(D-ribitylamino)uracil with 3,4-dihydroxy-2-butanone 4-phosphate. This is the penultimate step in the biosynthesis of riboflavin. The sequence is that of 6,7-dimethyl-8-ribityllumazine synthase from Bacillus cereus (strain ATCC 10987 / NRS 248).